Reading from the N-terminus, the 242-residue chain is Zinc-finger homeodomain protein 11 (242 aa).

Residues 31-82 (YKECLKNHAANLGGHALDGCGEFMPSPTATSTDPSSLRCAACGCHRNFHRRD) form a ZF-HD dimerization-type; degenerate zinc finger. Disordered regions lie at residues 83-109 (PSEN…SRHV) and 135-161 (PGPS…RTRT). The segment at residues 156–213 (RKRTRTKFTPEQKIKMRAFAEKAGWKINGCDEKSVREFCNEVGIERGVLKVWMHNNKY) is a DNA-binding region (homeobox; atypical).

As to quaternary structure, homo- and heterodimer with other ZFHD proteins. Interacts with HIPP20, HIPP21, HIPP22, HIPP23, HIPP24, HIPP26, HIPP27, HIPP30 and MED25 (via ACID domain). Interacts with NAC019, NAC055 and NAC072 (via NAC binding domain). Binds to ZHD1, ZHD2, ZHD3, ZHD4, ZHD5, ZHD6, ZHD7, ZHD8, ZHD9, ZHD12, ZHD13 and ZHD14. Expressed in roots, inflorescences, open flowers and seeds. Detected in stems and seedlings.

The protein resides in the nucleus. In terms of biological role, transcription factor involved in the up-regulation of several stress-inducible genes. Acts as a transcriptional activator by interacting with MED25 and NAC proteins. Involved in increased drought tolerance. The polypeptide is Zinc-finger homeodomain protein 11 (ZHD11) (Arabidopsis thaliana (Mouse-ear cress)).